Reading from the N-terminus, the 289-residue chain is Diacylglycerol pyrophosphate phosphatase 1 (289 aa).

Over 1-21 (MNRVSFIKTPFNIGAKWRLED) the chain is Vacuolar. A helical transmembrane segment spans residues 22-42 (VFLLIIMILLNYPVYYQQPFE). Residues 43–65 (RQFYINDLTISHPYATTERVNNN) lie on the Cytoplasmic side of the membrane. The chain crosses the membrane as a helical span at residues 66-86 (MLFVYSFVVPSLTILIIGSIL). The Vacuolar portion of the chain corresponds to 87–92 (ADRRHL). Residues 93 to 113 (IFILYTSLLGLSLAWFSTSFF) form a helical membrane-spanning segment. Residues 114–172 (TNFIKNWIGRLRPDFLDRCQPVEGLPLDTLFTAKDVCTTKNHERLLDGFRTTPSGHSSE) lie on the Cytoplasmic side of the membrane. Residues 118-126 (KNWIGRLRP) are phosphatase sequence motif I. The tract at residues 166–169 (PSGH) is phosphatase sequence motif II. 2 consecutive transmembrane segments (helical) span residues 173-193 (SFAG…TESP) and 194-214 (LMPL…ALIA). At 215-222 (LSRTQDYR) the chain is on the cytoplasmic side. The tract at residues 216 to 227 (SRTQDYRHHFVD) is phosphatase sequence motif III. A helical membrane pass occupies residues 223-243 (HHFVDVILGSMLGYIMAHFFY). Residues 244 to 289 (RRIFPPIDDPLPFKPLMDDSDVTLEEAVTHQRIPDEELHPLSDEGM) are Vacuolar-facing. Ser285 carries the post-translational modification Phosphoserine.

This sequence belongs to the PA-phosphatase related phosphoesterase family.

Its subcellular location is the vacuole membrane. The enzyme catalyses a 1,2-diacyl-sn-glycerol 3-diphosphate + H2O = a 1,2-diacyl-sn-glycero-3-phosphate + phosphate + H(+). The catalysed reaction is a 1,2-diacyl-sn-glycero-3-phosphate + H2O = a 1,2-diacyl-sn-glycerol + phosphate. It catalyses the reaction a 1-acyl-sn-glycero-3-phosphate + H2O = a 1-acyl-sn-glycerol + phosphate. Inhibited by sodium fluoride (NaF) and pyrophosphate. Strongly inhibited by manganese ion and, to a lower extent, by magnesium and calcium ions. Also inhibited by Cu(2+) ion. In an indirect manner, it is also inhibited by the zinc ion which is able to form a complex with DGPP and prevent the enzyme from removing the phosphate from the substrate. Not inhibited by N-ethylmaleimide. In terms of biological role, catalyzes the dephosphorylation of diacylglycerol diphosphate (DGPP) to phosphatidate (PA) and the subsequent dephosphorylation of PA to diacylglycerol (DAG). Together with LPP1, regulates intracellular DGPP and PA levels, which are phospholipid molecules believed to play a signaling role in stress response. Can also use lysophosphatidic acid (LPA) and phosphatidylglycerophosphate as substrates. Substrate preference is DGPP &gt; LPA &gt; PA. Activity is independent of a divalent cation ion and insensitive to inhibition by N-ethylmaleimide. The protein is Diacylglycerol pyrophosphate phosphatase 1 (DPP1) of Saccharomyces cerevisiae (strain ATCC 204508 / S288c) (Baker's yeast).